A 304-amino-acid polypeptide reads, in one-letter code: D-alanine--D-alanine ligase (304 aa).

In terms of domain architecture, ATP-grasp spans 100-301 (KLVALQSGIP…FGEFLEDLIK (202 aa)). 129-184 (ERKLGSPFIVKPCDVGSTIGLSLVRSASEYEVALEEAFRFSDRLLLEEFIDGFEVT) contacts ATP. Residues D256, E268, and N270 each coordinate Mg(2+).

Belongs to the D-alanine--D-alanine ligase family. Mg(2+) is required as a cofactor. The cofactor is Mn(2+).

The protein resides in the cytoplasm. It catalyses the reaction 2 D-alanine + ATP = D-alanyl-D-alanine + ADP + phosphate + H(+). Its pathway is cell wall biogenesis; peptidoglycan biosynthesis. Cell wall formation. This chain is D-alanine--D-alanine ligase, found in Coprothermobacter proteolyticus (strain ATCC 35245 / DSM 5265 / OCM 4 / BT).